The following is a 339-amino-acid chain: Erlin-2 (339 aa).

The Cytoplasmic segment spans residues 1 to 3; that stretch reads MAQ. The helical transmembrane segment at 4 to 24 threads the bilayer; it reads LGAVVAVASSFFCASLFSAVH. The Lumenal portion of the chain corresponds to 25-339; it reads KIEEGHIGVY…EPLETATKEN (315 aa). A glycan (N-linked (GlcNAc...) asparagine) is linked at Asn106. Residues 177-309 form an interaction with ERLIN1 region; the sequence is EAIRRNYELM…DIPNMFMDSA (133 aa). Lys267 bears the N6-acetyllysine mark.

This sequence belongs to the band 7/mec-2 family. Forms a heteromeric complex with ERLIN1. In complex with ERLIN1, interacts with RNF170. Interacts with activated ITPR1, independently of the degree of ITPR1 polyubiquitination. Interacts with SCAP, INSIG1, SREBF1 and SREBF2 under cholesterol sufficiency conditions; indicative for an association with the SCAP-SREBP-INSIG complex. Probably part of an AMFR/gp78 and INSIG1-containing ubiquitin ligase complex involved in ERAD of HMGCR. Interacts with TMUB1; TMUB1 bridges the association with AMFR. Interacts with SYVN1 and RNF139. Interacts with TMEM259. Interacts with TMEM41B. In terms of processing, deubiquitinated by USP25; leading to stabilization. As to expression, ubiquitous.

The protein resides in the endoplasmic reticulum membrane. Its function is as follows. Component of the ERLIN1/ERLIN2 complex which mediates the endoplasmic reticulum-associated degradation (ERAD) of inositol 1,4,5-trisphosphate receptors (IP3Rs) such as ITPR1. Promotes sterol-accelerated ERAD of HMGCR probably implicating an AMFR/gp78-containing ubiquitin ligase complex. Involved in regulation of cellular cholesterol homeostasis by regulation the SREBP signaling pathway. May promote ER retention of the SCAP-SREBF complex. The chain is Erlin-2 (ERLIN2) from Homo sapiens (Human).